Here is a 428-residue protein sequence, read N- to C-terminus: L-rhamnose isomerase (428 aa).

H260, D292, and D294 together coordinate Mn(2+).

This sequence belongs to the rhamnose isomerase family. It depends on Mn(2+) as a cofactor.

Its subcellular location is the cytoplasm. It catalyses the reaction L-rhamnopyranose = L-rhamnulose. The protein operates within carbohydrate degradation; L-rhamnose degradation; glycerone phosphate from L-rhamnose: step 1/3. Its function is as follows. Catalyzes the interconversion of L-rhamnose and L-rhamnulose. This is L-rhamnose isomerase from Enterococcus faecalis (strain ATCC 700802 / V583).